The following is a 540-amino-acid chain: Putative BTB/POZ domain-containing protein R224 (540 aa).

Positions 16 to 88 (TDLELTLIDE…FYKNPIKYKN (73 aa)) constitute a BTB domain. Residues 356–376 (IFVSLLNDIIFVLSSINMYFI) traverse the membrane as a helical segment.

This sequence belongs to the mimivirus BTB/WD family.

It localises to the membrane. This chain is Putative BTB/POZ domain-containing protein R224, found in Acanthamoeba polyphaga (Amoeba).